The chain runs to 219 residues: 2-C-methyl-D-erythritol 4-phosphate cytidylyltransferase (219 aa).

It belongs to the IspD/TarI cytidylyltransferase family. IspD subfamily.

It catalyses the reaction 2-C-methyl-D-erythritol 4-phosphate + CTP + H(+) = 4-CDP-2-C-methyl-D-erythritol + diphosphate. The protein operates within isoprenoid biosynthesis; isopentenyl diphosphate biosynthesis via DXP pathway; isopentenyl diphosphate from 1-deoxy-D-xylulose 5-phosphate: step 2/6. Its function is as follows. Catalyzes the formation of 4-diphosphocytidyl-2-C-methyl-D-erythritol from CTP and 2-C-methyl-D-erythritol 4-phosphate (MEP). The protein is 2-C-methyl-D-erythritol 4-phosphate cytidylyltransferase of Phocaeicola vulgatus (strain ATCC 8482 / DSM 1447 / JCM 5826 / CCUG 4940 / NBRC 14291 / NCTC 11154) (Bacteroides vulgatus).